The following is a 324-amino-acid chain: MDTLTRFLPEHLQQNQLPEALGGVLLSVVSACTEINAKVRLGALAGVLGMTGTGNIQGEDQKKLDVIANNIMIDTLKANPAVAGLASEEEDTFVSAGENGRYLVLFDPLDGSSNIDVNISVGTIFSILEKPEGALATESFLQTGRQQLAAGYVLYGPQTQLVFTFGHGVYMFTLNAENEFVLTKEKPKVPESTKEFAINMSNRRHWLPPVQQYIDELLAGETGTRGKNYNMRWVASMVAEIHRILMRGGVFMYPQDKRDPAKPGKLRLMYEANPMSLILEQAGASASNAYQAMLDIQPENLHQRVAVFMGSSEEVDYLNRLHSK.

Mg(2+) contacts are provided by Glu88, Asp107, Leu109, and Asp110. Substrate contacts are provided by residues 110 to 113, Asn199, and Lys265; that span reads DGSS. Residue Glu271 participates in Mg(2+) binding.

This sequence belongs to the FBPase class 1 family. In terms of assembly, homotetramer. Mg(2+) serves as cofactor.

It localises to the cytoplasm. It carries out the reaction beta-D-fructose 1,6-bisphosphate + H2O = beta-D-fructose 6-phosphate + phosphate. Its pathway is carbohydrate biosynthesis; gluconeogenesis. This chain is Fructose-1,6-bisphosphatase class 1, found in Neisseria meningitidis serogroup C (strain 053442).